The chain runs to 67 residues: Medusin-PT (67 aa).

Residues 1 to 22 (MAFLKKSLFLVFFLGFVSLSIC) form the signal peptide. Residues 23 to 48 (EEEKRETDEKENEQEDDREERSEEKR) constitute a propeptide that is removed on maturation. Residues 25-46 (EKRETDEKENEQEDDREERSEE) are disordered. The segment covering 31 to 40 (EKENEQEDDR) has biased composition (acidic residues). Leu66 carries the leucine amide modification.

This sequence belongs to the frog skin active peptide (FSAP) family. Medusin subfamily. In terms of processing, in the synthetic mutant medusin-PT1a [T58K], the Leu-50 has been modified in a D-amino acid. In medusin-PT1a, there is an increase in antimicrobial activity, and an increase in hemolytic activity. It is more potent against S.aureus and gains activity against MRSA, E.faecalis, E.coli, P.aeruginosa and C.albicans. There is an important increase in both biofilm inhibition and biofilm eradication. In terms of tissue distribution, expressed by the skin glands.

Its subcellular location is the secreted. The protein resides in the target cell membrane. Antimicrobial peptide with activity against Gram-positive bacteria S.epidermidis ATCC 12228 (MIC=50 uM) and S.aureus (MIC=64 ug/ml and MBC=128 ug/ml). Not active against some Gram-positive bacteria (methicillin-resistant S.aureus (MRSA), E.faecalis), Gram-negative bacterium E.coli ATCC 25922 and fungus C.albicans at concentrations up to 100 uM. Can only slightly inhibit the formation of biofilm by S.aureus (minimal biofilm inhibitionconcentration MBIC=512 ug/ml, minimal biofilm eradication concentration MBEC&gt;512 ug/ml). Has an anti-inflammatory effect, since it inhibits the production of the pro-inflammatory cytokines TNF-alpha and IL-1beta. Has high activity of stimulation of insulin release, which may protect the species from being eaten by predators by causing fatal hypoglycemia. Is not cytotoxic to cancer line cells. Shows very low hemolysis on horse erythrocytes and moderate hemolysis on mouse erythrocytes. The sequence is that of Medusin-PT from Phyllomedusa tarsius (Brownbelly leaf frog).